The chain runs to 467 residues: MVQKKTTEMKGFHRSFKGQNPFDAAYEMEARNMESVFNFDCPSRPDVPSSAPIDIPDAKKRTKKKKRCRATDSFTGRFDDMYQLQQEILGEGAYAKVQSCINLITNKEYAVKIIEKRPGHSRSRVFREVEMLYQCQGHSNVLELIEFFEEEDKFYLVFEKMCGGSILNHIHRRRHFNEREASFVVRDIAEALNYLHNKGIAHRDLKPENILCESPHQVSPVKICDFDLGSGIKLNSDCSPISTPELLTPCGSAEYMAPEVVEAFNEEASIYDKRCDLWSLGVILYIMLSGYPPFVGHCGSDCGWDRGEACPACQNMLFVSIQEGKYEFPEKDWAHISYGAKDLISKLLLRDAKKRLSAAQVLQHPWVQGNAPYNTLPTPIILQRNSSAKDLTSFAAEAIAMNRQLMEREEEEEGTENSSLCPFVVKATSCSMQLSPPSESKLAKRRQQGSKGGISPPSLAPLLIVSD.

Residues 83–367 (QLQQEILGEG…AAQVLQHPWV (285 aa)) form the Protein kinase domain. Residues 89–97 (LGEGAYAKV) and K112 contribute to the ATP site. Catalysis depends on D204, which acts as the Proton acceptor. 3 residues coordinate Zn(2+): C298, C310, and C313. The interval 432–467 (MQLSPPSESKLAKRRQQGSKGGISPPSLAPLLIVSD) is disordered.

It belongs to the protein kinase superfamily. CAMK Ser/Thr protein kinase family. Mg(2+) is required as a cofactor. Requires Zn(2+) as cofactor.

The catalysed reaction is L-seryl-[protein] + ATP = O-phospho-L-seryl-[protein] + ADP + H(+). It carries out the reaction L-threonyl-[protein] + ATP = O-phospho-L-threonyl-[protein] + ADP + H(+). Functionally, may play a role in the response to environmental stress and cytokines. Appears to regulate translation by phosphorylating EIF4E, thus increasing the affinity of this protein for the 7-methylguanosine-containing mRNA cap. This Xenopus laevis (African clawed frog) protein is MAP kinase-interacting serine/threonine-protein kinase 2 (mknk2).